The primary structure comprises 426 residues: Oligouridylate-binding protein 1A (426 aa).

A disordered region spans residues 1–26; sequence MQNQRLIKQQQQQQQQQHQQAMIQQA. Positions 9-26 are enriched in low complexity; sequence QQQQQQQQQHQQAMIQQA. 2 consecutive RRM domains span residues 63–137 and 148–226; these read RSVY…WAYA and FNIF…WATK. The segment at 230 to 268 is disordered; it reads FGEDKHSSDGKSVVELTNGSSEDGRELSNEDAPENNPQF. Phosphoserine is present on Ser250. The RRM 3 domain occupies 269–344; sequence TTVYVGNLSP…RQIRCSWGNK (76 aa).

As to quaternary structure, interacts with UBA1A and UBA2A.

The protein resides in the nucleus. Heterogeneous nuclear ribonucleoprotein (hnRNP)-like protein that acts as a component of the pre-mRNA processing machinery. Functions to facilitate the nuclear maturation of plant pre-mRNAs. The protein is Oligouridylate-binding protein 1A (UBP1A) of Arabidopsis thaliana (Mouse-ear cress).